We begin with the raw amino-acid sequence, 544 residues long: Glucose starvation modulator protein 1 (544 aa).

A DNA-binding region (zn(2)-C6 fungal-type) is located at residues 20-48 (CVFCHSKHLQCSNERPCKNCMKRNLGDQC). The disordered stretch occupies residues 65-93 (KKMKSRTNSISSSYRSPSVSESPQNPYTH). Low complexity predominate over residues 70–86 (RTNSISSSYRSPSVSES). The PAS domain occupies 403-475 (SLIDYEKLLL…FKLFKSVAVG (73 aa)).

It belongs to the ERT1/acuK family.

It localises to the nucleus. Functionally, transcription factor which regulates nonfermentable carbon utilization. This Debaryomyces hansenii (strain ATCC 36239 / CBS 767 / BCRC 21394 / JCM 1990 / NBRC 0083 / IGC 2968) (Yeast) protein is Glucose starvation modulator protein 1 (GSM1).